A 397-amino-acid chain; its full sequence is uncharacterized protein (397 aa).

This is an uncharacterized protein from Nostoc sp. (strain PCC 7120 / SAG 25.82 / UTEX 2576).